Consider the following 320-residue polypeptide: MARQRKKKGRPVSGWVVFDKPKGMKSTEAVSKIKWLFHAQKAGHAGTLDPLASGLLPIALGEATKTVPYVMQGKKTYRFHIAWGQERSTDDLEGEITKTSLKRPTQEEILALLPQYTGIILQTPPQFSAIKIAGNRAYDLAREGEVIEIPPREVEIETFKLVETPTKEHSVFEITCGKGTYVRSLARDMGRDLGCYGHIADLRRIAVAPFCEEDLVTWDELKAAISPNKNTTDENENSFEKDFLTLDELLIETGAALDCLPHYPLTDTQAQRVMRGHSIPLSAQKTLLDEEEVCVLYKEQLLAIGTLDKGLFKPKRIFTI.

Asp49 acts as the Nucleophile in catalysis.

It belongs to the pseudouridine synthase TruB family. Type 1 subfamily.

It catalyses the reaction uridine(55) in tRNA = pseudouridine(55) in tRNA. Responsible for synthesis of pseudouridine from uracil-55 in the psi GC loop of transfer RNAs. This is tRNA pseudouridine synthase B from Bartonella tribocorum (strain CIP 105476 / IBS 506).